Here is a 304-residue protein sequence, read N- to C-terminus: Release factor glutamine methyltransferase (304 aa).

The S-adenosyl-L-methionine site is built by D144 and N188. 188–191 (NPPY) serves as a coordination point for substrate.

Belongs to the protein N5-glutamine methyltransferase family. PrmC subfamily.

The catalysed reaction is L-glutaminyl-[peptide chain release factor] + S-adenosyl-L-methionine = N(5)-methyl-L-glutaminyl-[peptide chain release factor] + S-adenosyl-L-homocysteine + H(+). Its function is as follows. Methylates the class 1 translation termination release factors RF1/PrfA and RF2/PrfB on the glutamine residue of the universally conserved GGQ motif. In Mycobacterium tuberculosis (strain ATCC 25618 / H37Rv), this protein is Release factor glutamine methyltransferase.